Consider the following 771-residue polypeptide: Semaphorin-3A (771 aa).

Residues 1–20 (MGWLTRIVCLFWGVLLTARA) form the signal peptide. Residues 31 to 514 (RLKLSYKEML…STAGVAQLPL (484 aa)) form the Sema domain. An N-linked (GlcNAc...) asparagine glycan is attached at Asn-53. Cys-103 and Cys-114 are disulfide-bonded. Asn-125 is a glycosylation site (N-linked (GlcNAc...) asparagine). 4 disulfide bridges follow: Cys-132-Cys-141, Cys-269-Cys-381, Cys-293-Cys-341, and Cys-517-Cys-535. In terms of domain architecture, Ig-like C2-type spans 580-664 (PEERIIYGVE…GFIQTLLKVT (85 aa)). Asn-590 carries N-linked (GlcNAc...) asparagine glycosylation. Cys-649 and Cys-722 are oxidised to a cystine. Basic residues predominate over residues 728–737 (RDRKQRRQRP). The interval 728-771 (RDRKQRRQRPGHTPGNSNKWKHLQENKKGRNRRTHEFERAPRSV) is disordered. Positions 749–771 (HLQENKKGRNRRTHEFERAPRSV) are enriched in basic and acidic residues.

The protein belongs to the semaphorin family. Interacts with PLXND1. Expressed in the dorsal root ganglia.

The protein resides in the secreted. In terms of biological role, involved in the development of the olfactory system and in neuronal control of puberty. Induces the collapse and paralysis of neuronal growth cones. Could serve as a ligand that guides specific growth cones by a motility-inhibiting mechanism. Binds to the complex neuropilin-1/plexin-1. In Homo sapiens (Human), this protein is Semaphorin-3A (SEMA3A).